A 387-amino-acid chain; its full sequence is Early growth response protein 3 (387 aa).

The segment at 241–283 (PGFGSLPQPPLTLKPIRPRKYPNRPSKTPLHERPHACPAEGCD) is disordered. Over residues 269 to 283 (PLHERPHACPAEGCD) the composition is skewed to basic and acidic residues. C2H2-type zinc fingers lie at residues 275–299 (HACP…LRIH), 305–327 (FQCR…IRTH), and 333–355 (FACE…AKIH). The segment at 348 to 387 (RKRHAKIHLKQKEKKAEKGGAPSASSAPPVSLAPVVTTCA) is disordered. The segment covering 350–360 (RHAKIHLKQKE) has biased composition (basic residues). The span at 368 to 387 (APSASSAPPVSLAPVVTTCA) shows a compositional bias: low complexity.

It belongs to the EGR C2H2-type zinc-finger protein family.

The protein localises to the nucleus. In terms of biological role, probable transcription factor involved in muscle spindle development. The sequence is that of Early growth response protein 3 (EGR3) from Homo sapiens (Human).